The primary structure comprises 206 residues: Thymidylate kinase (206 aa).

16–23 lines the ATP pocket; sequence GIDGTGKS.

This sequence belongs to the thymidylate kinase family.

It catalyses the reaction dTMP + ATP = dTDP + ADP. Phosphorylation of dTMP to form dTDP in both de novo and salvage pathways of dTTP synthesis. The polypeptide is Thymidylate kinase (Akkermansia muciniphila (strain ATCC BAA-835 / DSM 22959 / JCM 33894 / BCRC 81048 / CCUG 64013 / CIP 107961 / Muc)).